Consider the following 716-residue polypeptide: 1,4-alpha-glucan branching enzyme GlgB (716 aa).

The active-site Nucleophile is aspartate 394. Glutamate 447 serves as the catalytic Proton donor.

Belongs to the glycosyl hydrolase 13 family. GlgB subfamily. Monomer.

The enzyme catalyses Transfers a segment of a (1-&gt;4)-alpha-D-glucan chain to a primary hydroxy group in a similar glucan chain.. Its pathway is glycan biosynthesis; glycogen biosynthesis. Functionally, catalyzes the formation of the alpha-1,6-glucosidic linkages in glycogen by scission of a 1,4-alpha-linked oligosaccharide from growing alpha-1,4-glucan chains and the subsequent attachment of the oligosaccharide to the alpha-1,6 position. The protein is 1,4-alpha-glucan branching enzyme GlgB of Photobacterium profundum (strain SS9).